The chain runs to 224 residues: Ribose-5-phosphate isomerase A (224 aa).

Residues 32-35, 85-88, and 98-101 contribute to the substrate site; these read TGST, DGAD, and KGGG. Glu107 serves as the catalytic Proton acceptor. Lys125 is a substrate binding site.

It belongs to the ribose 5-phosphate isomerase family. In terms of assembly, homodimer.

The catalysed reaction is aldehydo-D-ribose 5-phosphate = D-ribulose 5-phosphate. It participates in carbohydrate degradation; pentose phosphate pathway; D-ribose 5-phosphate from D-ribulose 5-phosphate (non-oxidative stage): step 1/1. Its function is as follows. Catalyzes the reversible conversion of ribose-5-phosphate to ribulose 5-phosphate. The sequence is that of Ribose-5-phosphate isomerase A from Pseudomonas putida (strain ATCC 700007 / DSM 6899 / JCM 31910 / BCRC 17059 / LMG 24140 / F1).